Here is a 1048-residue protein sequence, read N- to C-terminus: 3-hydroxy-3-methylglutaryl-coenzyme A reductase (1048 aa).

At 1–32 the chain is on the cytoplasmic side; that stretch reads MDPVVKKPSPGGVQHRVTKGLRAIVGHACRHP. The chain crosses the membrane as a helical span at residues 33–53; that stretch reads IHTLLVTALTAATTHLHVLEG. The Lumenal portion of the chain corresponds to 54-220; it reads TYQAAHRGLA…FLHRVKHAET (167 aa). The helical transmembrane segment at 221-241 threads the bilayer; that stretch reads VDLVIIGLSYLAMNMTVVSLF. Positions 222-403 constitute an SSD domain; it reads DLVIIGLSYL…FTFYATILCV (182 aa). At 242 to 250 the chain is on the cytoplasmic side; sequence RVMRQLGSR. Residues 251–271 form a helical membrane-spanning segment; it reads FWLATSVLLSGAFAFVLGLGI. Residues 272 to 276 lie on the Lumenal side of the membrane; it reads TTTCD. Residues 277–297 form a helical membrane-spanning segment; that stretch reads VPVDMLLLFEGIPYLVLTVGF. Residues 298–348 are Cytoplasmic-facing; the sequence is EKPIQLTRAVLCVSEELRGGWQRPVPNGASSDDSRQSQLIPNIIQLAVDRE. Residues 349-369 form a helical membrane-spanning segment; that stretch reads GWYIVRSYLLEIGALALGAVL. At 370-377 the chain is on the lumenal side; it reads RPNDSLGH. N-linked (GlcNAc...) asparagine glycosylation occurs at asparagine 372. A helical transmembrane segment spans residues 378 to 398; the sequence is FCFLAAWTLLIDAILLFTFYA. Residues 399–439 are Cytoplasmic-facing; it reads TILCVKLEITRIRSPGGLGQVNAKHPSGIFGHKVKSTNITW. A helical membrane pass occupies residues 440–460; the sequence is WKLLTVGGFVLCHFLQLSPFF. Over 461–542 the chain is Lumenal; it reads YRVMGEYMAN…LDGLESPLGR (82 aa). Asparagine 470 and asparagine 520 each carry an N-linked (GlcNAc...) asparagine glycan. A helical membrane pass occupies residues 543-563; the sequence is LCLMGALVVSLVLNNHLIHAA. The Cytoplasmic segment spans residues 564–1048; it reads RWHAWPQARE…NRSAGATVKK (485 aa). Catalysis depends on glutamate 729, which acts as the Charge relay system. Residue 735–741 participates in CoA binding; the sequence is SASRGCK. NADP(+) is bound by residues 796-798 and 823-831; these read SRF and DAMGMNMIS. Lysine 863 (charge relay system) is an active-site residue. 892 to 894 provides a ligand contact to CoA; it reads VLK. Catalysis depends on aspartate 939, which acts as the Charge relay system. 1034-1035 provides a ligand contact to CoA; sequence AH. Histidine 1035 functions as the Proton donor in the catalytic mechanism. 1039-1040 is an NADP(+) binding site; it reads NR.

It belongs to the HMG-CoA reductase family.

It localises to the endoplasmic reticulum membrane. It catalyses the reaction (R)-mevalonate + 2 NADP(+) + CoA = (3S)-3-hydroxy-3-methylglutaryl-CoA + 2 NADPH + 2 H(+). The protein operates within metabolic intermediate biosynthesis; (R)-mevalonate biosynthesis; (R)-mevalonate from acetyl-CoA: step 3/3. Its function is as follows. HMG-CoA reductase; part of the first module of ergosterol biosynthesis pathway that includes the early steps of the pathway, conserved across all eukaryotes, and which results in the formation of mevalonate from acetyl-coenzyme A (acetyl-CoA). In this module, the cytosolic acetyl-CoA acetyltransferase catalyzes the formation of acetoacetyl-CoA. The hydroxymethylglutaryl-CoA synthase then condenses acetyl-CoA with acetoacetyl-CoA to form HMG-CoA. The rate-limiting step of the early module is the reduction to mevalonate by the 3-hydroxy-3-methylglutaryl-coenzyme A (HMG-CoA) reductase. This Aspergillus terreus (strain NIH 2624 / FGSC A1156) protein is 3-hydroxy-3-methylglutaryl-coenzyme A reductase.